We begin with the raw amino-acid sequence, 555 residues long: Glutamine--tRNA ligase (555 aa).

A 'HIGH' region motif is present at residues 35–45 (PEPNGYLHIGH). ATP is bound by residues 36-38 (EPN) and 42-48 (HIGHAKS). L-glutamine-binding residues include Asp-68 and Tyr-213. Residues Thr-232 and 262-263 (RL) contribute to the ATP site. The 'KMSKS' region signature appears at 269-273 (ITSKR).

It belongs to the class-I aminoacyl-tRNA synthetase family. As to quaternary structure, monomer.

Its subcellular location is the cytoplasm. It carries out the reaction tRNA(Gln) + L-glutamine + ATP = L-glutaminyl-tRNA(Gln) + AMP + diphosphate. This Stutzerimonas stutzeri (strain A1501) (Pseudomonas stutzeri) protein is Glutamine--tRNA ligase.